A 288-amino-acid chain; its full sequence is Thymidylate synthase (288 aa).

DUMP contacts are provided by residues arginine 21 and 150 to 151 (RR). Cysteine 170 acts as the Nucleophile in catalysis. Residues 191–194 (RSGD), asparagine 202, and 232–234 (HIY) contribute to the dUMP site. (6R)-5,10-methylene-5,6,7,8-tetrahydrofolate is bound at residue aspartate 194. Alanine 287 is a binding site for (6R)-5,10-methylene-5,6,7,8-tetrahydrofolate.

It belongs to the thymidylate synthase family. Bacterial-type ThyA subfamily. Homodimer.

Its subcellular location is the cytoplasm. It carries out the reaction dUMP + (6R)-5,10-methylene-5,6,7,8-tetrahydrofolate = 7,8-dihydrofolate + dTMP. Its pathway is pyrimidine metabolism; dTTP biosynthesis. In terms of biological role, catalyzes the reductive methylation of 2'-deoxyuridine-5'-monophosphate (dUMP) to 2'-deoxythymidine-5'-monophosphate (dTMP) while utilizing 5,10-methylenetetrahydrofolate (mTHF) as the methyl donor and reductant in the reaction, yielding dihydrofolate (DHF) as a by-product. This enzymatic reaction provides an intracellular de novo source of dTMP, an essential precursor for DNA biosynthesis. The sequence is that of Thymidylate synthase from Mesoplasma florum (strain ATCC 33453 / NBRC 100688 / NCTC 11704 / L1) (Acholeplasma florum).